We begin with the raw amino-acid sequence, 445 residues long: Argininosuccinate synthase (445 aa).

ATP contacts are provided by residues 17–25 and Ala43; that span reads AFSGGLDTS. An L-citrulline-binding site is contributed by Tyr99. Residues Gly129 and Thr131 each contribute to the ATP site. Residues Thr131, Asn135, and Asp136 each contribute to the L-aspartate site. Residue Asn135 participates in L-citrulline binding. Asp136 lines the ATP pocket. 2 residues coordinate L-citrulline: Arg139 and Ser192. Residue Asp194 coordinates ATP. Positions 201, 203, and 280 each coordinate L-citrulline.

This sequence belongs to the argininosuccinate synthase family. Type 2 subfamily. In terms of assembly, homotetramer.

The protein localises to the cytoplasm. The enzyme catalyses L-citrulline + L-aspartate + ATP = 2-(N(omega)-L-arginino)succinate + AMP + diphosphate + H(+). Its pathway is amino-acid biosynthesis; L-arginine biosynthesis; L-arginine from L-ornithine and carbamoyl phosphate: step 2/3. The polypeptide is Argininosuccinate synthase (Herminiimonas arsenicoxydans).